A 290-amino-acid polypeptide reads, in one-letter code: Light-independent protochlorophyllide reductase iron-sulfur ATP-binding protein (290 aa).

ATP-binding positions include 10–15 (GIGKST) and lysine 39. Position 14 (serine 14) interacts with Mg(2+). [4Fe-4S] cluster contacts are provided by cysteine 95 and cysteine 129. 180–181 (NR) lines the ATP pocket.

It belongs to the NifH/BchL/ChlL family. As to quaternary structure, homodimer. Protochlorophyllide reductase is composed of three subunits; ChlL, ChlN and ChlB. [4Fe-4S] cluster is required as a cofactor.

It is found in the plastid. It localises to the chloroplast. It carries out the reaction chlorophyllide a + oxidized 2[4Fe-4S]-[ferredoxin] + 2 ADP + 2 phosphate = protochlorophyllide a + reduced 2[4Fe-4S]-[ferredoxin] + 2 ATP + 2 H2O. It functions in the pathway porphyrin-containing compound metabolism; chlorophyll biosynthesis (light-independent). Component of the dark-operative protochlorophyllide reductase (DPOR) that uses Mg-ATP and reduced ferredoxin to reduce ring D of protochlorophyllide (Pchlide) to form chlorophyllide a (Chlide). This reaction is light-independent. The L component serves as a unique electron donor to the NB-component of the complex, and binds Mg-ATP. This is Light-independent protochlorophyllide reductase iron-sulfur ATP-binding protein from Cycas taitungensis (Prince sago).